The primary structure comprises 471 residues: N-succinylglutamate 5-semialdehyde dehydrogenase (471 aa).

An NAD(+)-binding site is contributed by 207–212; sequence GSAHAG. Active-site residues include Glu230 and Cys264.

This sequence belongs to the aldehyde dehydrogenase family. AstD subfamily.

The enzyme catalyses N-succinyl-L-glutamate 5-semialdehyde + NAD(+) + H2O = N-succinyl-L-glutamate + NADH + 2 H(+). It functions in the pathway amino-acid degradation; L-arginine degradation via AST pathway; L-glutamate and succinate from L-arginine: step 4/5. In terms of biological role, catalyzes the NAD-dependent reduction of succinylglutamate semialdehyde into succinylglutamate. The polypeptide is N-succinylglutamate 5-semialdehyde dehydrogenase (Novosphingobium aromaticivorans (strain ATCC 700278 / DSM 12444 / CCUG 56034 / CIP 105152 / NBRC 16084 / F199)).